The chain runs to 167 residues: Large ribosomal subunit protein bL9 (167 aa).

Belongs to the bacterial ribosomal protein bL9 family.

Functionally, binds to the 23S rRNA. This chain is Large ribosomal subunit protein bL9, found in Nitratidesulfovibrio vulgaris (strain DSM 19637 / Miyazaki F) (Desulfovibrio vulgaris).